The chain runs to 874 residues: Alanine--tRNA ligase (874 aa).

Positions 563, 567, 665, and 669 each coordinate Zn(2+).

The protein belongs to the class-II aminoacyl-tRNA synthetase family. Zn(2+) serves as cofactor.

The protein resides in the cytoplasm. The catalysed reaction is tRNA(Ala) + L-alanine + ATP = L-alanyl-tRNA(Ala) + AMP + diphosphate. Its function is as follows. Catalyzes the attachment of alanine to tRNA(Ala) in a two-step reaction: alanine is first activated by ATP to form Ala-AMP and then transferred to the acceptor end of tRNA(Ala). Also edits incorrectly charged Ser-tRNA(Ala) and Gly-tRNA(Ala) via its editing domain. The chain is Alanine--tRNA ligase from Haemophilus influenzae (strain ATCC 51907 / DSM 11121 / KW20 / Rd).